The following is a 201-amino-acid chain: Recombination protein RecR (201 aa).

The C4-type zinc-finger motif lies at 60 to 75; that stretch reads CSRCGNVDTVDPCTVC. The Toprim domain occupies 83–178; the sequence is SVIIVVEDVS…KITRLAHGVP (96 aa).

This sequence belongs to the RecR family.

Functionally, may play a role in DNA repair. It seems to be involved in an RecBC-independent recombinational process of DNA repair. It may act with RecF and RecO. This Rhizobium etli (strain ATCC 51251 / DSM 11541 / JCM 21823 / NBRC 15573 / CFN 42) protein is Recombination protein RecR.